A 233-amino-acid polypeptide reads, in one-letter code: Choline-phosphate cytidylyltransferase (233 aa).

6 residues coordinate CDP-choline: Leu-6, Ala-8, Gly-9, Tyr-80, Ser-85, and Ala-101. Mg(2+) is bound at residue Asp-102. Tyr-187 contributes to the CDP-choline binding site. Mg(2+)-binding residues include Glu-213 and Asp-215.

Belongs to the LicC/PntC cytidylyltransferase family. Requires Mg(2+) as cofactor.

The enzyme catalyses phosphocholine + CTP + H(+) = CDP-choline + diphosphate. It functions in the pathway lipopolysaccharide biosynthesis. Functionally, cytidylyltransferase involved in the biosynthesis of lipopolysaccharides (LPS), a necessary component and antigenic determinant of the outer membrane that has been shown to be an important factor in the host-parasite interaction in a number of Gram-negative species. Catalyzes the activation of phosphocholine (P-Cho) to CDP-choline (CDP-Cho). LicC is critical for the expression of the 6A2-specific epitope. The protein is Choline-phosphate cytidylyltransferase of Haemophilus influenzae (strain ATCC 51907 / DSM 11121 / KW20 / Rd).